The primary structure comprises 520 residues: Protein FAM124A (520 aa).

Disordered stretches follow at residues 1–34 (MDRKAGEDDWEDSGAETGGSDYSRLSSTSSELSV) and 311–334 (FKSGKHKGRAGNGQVQHFGGSQMD). Residues 20–32 (SDYSRLSSTSSEL) are compositionally biased toward low complexity.

The protein belongs to the FAM124 family.

The chain is Protein FAM124A (fam124a) from Xenopus laevis (African clawed frog).